A 700-amino-acid polypeptide reads, in one-letter code: Constitutive coactivator of peroxisome proliferator-activated receptor gamma (700 aa).

Belongs to the constitutive coactivator of PPAR-gamma family. In terms of assembly, interacts with ESR1 and RXRA. Interacts with PPARG; in a ligand-independent manner.

Its subcellular location is the nucleus. In terms of biological role, functions as a transactivator of PPARG and ESR1. Functions in adipogenesis through PPARG activation. This Bos taurus (Bovine) protein is Constitutive coactivator of peroxisome proliferator-activated receptor gamma (FAM120B).